The sequence spans 71 residues: DNA-directed RNA polymerase subunit omega (71 aa).

Belongs to the RNA polymerase subunit omega family. As to quaternary structure, the RNAP catalytic core consists of 2 alpha, 1 beta/beta' and 1 omega subunit. When a sigma factor is associated with the core the holoenzyme is formed, which can initiate transcription.

It catalyses the reaction RNA(n) + a ribonucleoside 5'-triphosphate = RNA(n+1) + diphosphate. In terms of biological role, promotes RNA polymerase assembly. Latches the N- and C-terminal regions of the beta' subunit thereby facilitating its interaction with the beta and alpha subunits. This is DNA-directed RNA polymerase subunit omega from Wolinella succinogenes (strain ATCC 29543 / DSM 1740 / CCUG 13145 / JCM 31913 / LMG 7466 / NCTC 11488 / FDC 602W) (Vibrio succinogenes).